A 393-amino-acid polypeptide reads, in one-letter code: tRNA(Met) cytidine acetate ligase (393 aa).

G81, N142, and R167 together coordinate ATP.

The protein belongs to the TmcAL family.

The protein resides in the cytoplasm. The catalysed reaction is cytidine(34) in elongator tRNA(Met) + acetate + ATP = N(4)-acetylcytidine(34) in elongator tRNA(Met) + AMP + diphosphate. In terms of biological role, catalyzes the formation of N(4)-acetylcytidine (ac(4)C) at the wobble position of elongator tRNA(Met), using acetate and ATP as substrates. First activates an acetate ion to form acetyladenylate (Ac-AMP) and then transfers the acetyl group to tRNA to form ac(4)C34. This Bacillus cereus (strain ZK / E33L) protein is tRNA(Met) cytidine acetate ligase.